We begin with the raw amino-acid sequence, 807 residues long: SWI/SNF complex subunit SWI3C (807 aa).

The segment at M1–V74 is disordered. The span at E28–D54 shows a compositional bias: acidic residues. In terms of domain architecture, SWIRM spans H176 to G274. The ZZ-type; degenerate zinc finger occupies L340–F394. The Zn(2+) site is built by C345, C348, C368, and C371. The SANT domain occupies Q398 to G449. Composition is skewed to polar residues over residues G458–N467 and E552–E569. 2 disordered regions span residues G458–G487 and L549–Q571. Positions A598 to L656 form a coiled coil. 2 stretches are compositionally biased toward low complexity: residues Q692–Q703 and Q726–Q739. 3 disordered regions span residues Q692–N713, H721–A740, and S781–N807. Over residues S798–N807 the composition is skewed to gly residues.

As to quaternary structure, heterodimer. Interacts with SWI3A, SWI3B and BRM, but not with BSH. Interacts with MORC6 and SUVH9. In terms of tissue distribution, expressed in roots, stems, leaves, flowers and siliques.

It localises to the nucleus. Component of a multiprotein complex equivalent of the SWI/SNF complex, an ATP-dependent chromatin-remodeling complex, which is required for the positive and negative regulation of gene expression of a large number of genes. It changes chromatin structure by altering DNA-histone contacts within a nucleosome, leading eventually to a change in nucleosome position, thus facilitating or repressing binding of gene-specific transcription factors. This chain is SWI/SNF complex subunit SWI3C (SWI3C), found in Arabidopsis thaliana (Mouse-ear cress).